We begin with the raw amino-acid sequence, 344 residues long: Uroporphyrinogen decarboxylase (344 aa).

Substrate contacts are provided by residues Arg23–Arg27, Asp73, Tyr149, Thr204, and His321.

This sequence belongs to the uroporphyrinogen decarboxylase family. In terms of assembly, homodimer.

It localises to the cytoplasm. The catalysed reaction is uroporphyrinogen III + 4 H(+) = coproporphyrinogen III + 4 CO2. The protein operates within porphyrin-containing compound metabolism; protoporphyrin-IX biosynthesis; coproporphyrinogen-III from 5-aminolevulinate: step 4/4. Its function is as follows. Catalyzes the decarboxylation of four acetate groups of uroporphyrinogen-III to yield coproporphyrinogen-III. This chain is Uroporphyrinogen decarboxylase, found in Francisella tularensis subsp. novicida (strain U112).